A 355-amino-acid chain; its full sequence is Probable protein phosphatase 2C 21 (355 aa).

The 307-residue stretch at 23–329 (RFGLSSMQGW…DNMTIILVQF (307 aa)) folds into the PPM-type phosphatase domain. Residues Asp-57, Gly-58, Asp-272, and Asp-320 each contribute to the Mn(2+) site. The disordered stretch occupies residues 329-355 (FKKPNPSETEPEDSKPEPSEDEPSSSS).

This sequence belongs to the PP2C family. Mg(2+) is required as a cofactor. The cofactor is Mn(2+).

It catalyses the reaction O-phospho-L-seryl-[protein] + H2O = L-seryl-[protein] + phosphate. The catalysed reaction is O-phospho-L-threonyl-[protein] + H2O = L-threonyl-[protein] + phosphate. In Arabidopsis thaliana (Mouse-ear cress), this protein is Probable protein phosphatase 2C 21 (PPC4-2).